We begin with the raw amino-acid sequence, 1040 residues long: Multidrug resistance protein MdtB (1040 aa).

12 helical membrane passes run 25–45 (LLMA…PVAA), 347–367 (LMLA…NIPA), 369–389 (IIPG…MVFL), 396–416 (LTLM…IVVI), 440–460 (IGFT…PLLF), 472–492 (FAVT…TLTP), 537–557 (WLTL…WIVI), 863–883 (LGST…VLGV), 888–908 (FIHP…ALLA), 910–930 (IIAG…LIGI), 968–988 (ILMT…STGV), and 998–1018 (IAMV…TPVI).

The protein belongs to the resistance-nodulation-cell division (RND) (TC 2.A.6) family. MdtB subfamily. As to quaternary structure, part of a tripartite efflux system composed of MdtA, MdtB and MdtC. MdtB forms a heteromultimer with MdtC.

It is found in the cell inner membrane. The polypeptide is Multidrug resistance protein MdtB (Salmonella newport (strain SL254)).